Consider the following 296-residue polypeptide: MSATVSTVSADLHKAIDAGDEDKITKITASYGSEQRDKIIPAYHANYGIPPSEAIRKAFKTGFYETMIVHAWTSRFELRAKLIHESIKGKIDVITLLDLVIACMPDDWYGTKVCYTKLYGRELVREIDEVIGVGTPWQSLVSGWVKHDRKYRKSIKSDAEAFRMALDSDNYEVLGSMLATSVPDEWMRIAAAYEETTGMPIDQAIASRYVKVDQTALILAHHWLCDPGQAAAYICSQCCAERKGNYARICRFTSMMYDHCLKCKYAYRAYGSLAMDIRKCFEPKLAKHLLVFWRVE.

Annexin repeat units lie at residues 3–72, 74–146, 153–223, and 226–294; these read ATVS…VHAW, SRFE…GWVK, KSIK…AHHW, and DPGQ…VFWR.

The protein belongs to the annexin family. Giardin subunit alpha subfamily.

It localises to the cytoplasm. The protein resides in the cytoskeleton. Functionally, giardins are involved in parasite attachment to the intestinal mucosa and in the cytoskeletal disassembly and reassembly that marks the transition from infectious trophozoite to transmissible cyst. They may interact with other cytoskeletal proteins such as microtubules in the microribbons or crossbridges, to maintain the integrity of the ventral disk. The polypeptide is Giardin subunit alpha-4 (Giardia intestinalis (Giardia lamblia)).